The following is a 177-amino-acid chain: MNDSPVLVVGLGNPGPKYVGTRHNIGFEVVEELVGRNYANFSVHKRSNTEIAQLPGLIVAKPRSFMNLSGTPIRALCDFFKISPANVLVVHDELDLDFGQVKLRQGGGDHGHNGLKSTSRSLGTKDYWKLSVGIGRPPGRMDPATFVLKPFSKQEQDSVPIMAADAADLIEEHIRTL.

Residue tyrosine 18 participates in tRNA binding. The active-site Proton acceptor is the histidine 23. TRNA-binding residues include phenylalanine 65, asparagine 67, and asparagine 113.

This sequence belongs to the PTH family. As to quaternary structure, monomer.

The protein resides in the cytoplasm. The catalysed reaction is an N-acyl-L-alpha-aminoacyl-tRNA + H2O = an N-acyl-L-amino acid + a tRNA + H(+). Functionally, hydrolyzes ribosome-free peptidyl-tRNAs (with 1 or more amino acids incorporated), which drop off the ribosome during protein synthesis, or as a result of ribosome stalling. In terms of biological role, catalyzes the release of premature peptidyl moieties from peptidyl-tRNA molecules trapped in stalled 50S ribosomal subunits, and thus maintains levels of free tRNAs and 50S ribosomes. This Corynebacterium efficiens (strain DSM 44549 / YS-314 / AJ 12310 / JCM 11189 / NBRC 100395) protein is Peptidyl-tRNA hydrolase.